A 37-amino-acid chain; its full sequence is Large ribosomal subunit protein bL36 (37 aa).

Belongs to the bacterial ribosomal protein bL36 family.

This is Large ribosomal subunit protein bL36 from Heliobacterium modesticaldum (strain ATCC 51547 / Ice1).